A 321-amino-acid polypeptide reads, in one-letter code: Zinc finger protein 524 (321 aa).

Composition is skewed to polar residues over residues 1-14 (MDNPSSDPLPSTLS) and 39-48 (ATTSNRTLKS). 2 disordered regions span residues 1–80 (MDNP…DLLL) and 86–105 (VPYTVPEGSAADGPQGSGSK). Positions 49 to 59 (SLPRKRGRPPR) form a DNA-binding region, a.T hook. 4 C2H2-type zinc fingers span residues 109–131 (HFCPVCLRAFPYLSDLERHSISH), 137–159 (HVCKDCGKTFKRSSHLRRHCNIH), 165–187 (FRCVLCPRRFREAGELAHHHRIH), and 193–216 (YQCPSCRVRFTEANTLRRHYKRKH). Positions 248–321 (GVQEESPEGK…PGAIGHPPVD (74 aa)) are disordered. Positions 262–271 (PISSTTSPLS) are enriched in polar residues. Residues 274-285 (TAGGSAGAGRGQ) show a composition bias toward gly residues.

Belongs to the krueppel C2H2-type zinc-finger protein family.

The protein localises to the nucleus. May be involved in transcriptional regulation. This chain is Zinc finger protein 524 (Znf524), found in Mus musculus (Mouse).